A 364-amino-acid chain; its full sequence is Tyrosyl-DNA phosphodiesterase 2 (364 aa).

An N-acetylmethionine modification is found at Met-1. Over residues 1–10 (MERNSGPEAG) the composition is skewed to low complexity. Residues 1 to 21 (MERNSGPEAGPEAELEEGEPE) form a disordered region. A Glycyl lysine isopeptide (Lys-Gly) (interchain with G-Cter in SUMO2) cross-link involves residue Lys-23. The segment at 68–108 (ESASESRPESLSEPGSCVDLTKEETNDSISSKTSTSEDKSV) is disordered. 2 positions are modified to phosphothreonine; by ACVR1B: Thr-88 and Thr-92. A Phosphoserine modification is found at Ser-95. The tract at residues 122–126 (NIDGL) is interaction with 5' end of substrate DNA. Residues Asp-124 and Glu-154 each coordinate Mg(2+). Positions 228–233 (HLESTR) are interaction with 5' end of substrate DNA. Asp-264 (proton donor/acceptor) is an active-site residue. The segment at 266–268 (NLR) is interaction with 5' end of substrate DNA.

Belongs to the CCR4/nocturin family. Interacts with TRAF2, TRAF3, TRAF5, TRAF6, TNFRSF8/CD30, TNFRSF5/CD40, TNFRSF1B/TNF-R75, ETS1, ETS2, FLI1, SMAD3 and ACVR1B/ALK4. It depends on Mg(2+) as a cofactor. Requires Mn(2+) as cofactor. Ubiquitinated by TRAF6.

It is found in the nucleus. It localises to the PML body. Its subcellular location is the nucleolus. The protein localises to the cytoplasm. DNA repair enzyme that can remove a variety of covalent adducts from DNA through hydrolysis of a 5'-phosphodiester bond, giving rise to DNA with a free 5' phosphate. Catalyzes the hydrolysis of dead-end complexes between DNA and the topoisomerase 2 (TOP2) active site tyrosine residue. The 5'-tyrosyl DNA phosphodiesterase activity can enable the repair of TOP2-induced DNA double-strand breaks/DSBs without the need for nuclease activity, creating a 'clean' DSB with 5'-phosphate termini that are ready for ligation. Thereby, protects the transcription of many genes involved in neurological development and maintenance from the abortive activity of TOP2. Hydrolyzes 5'-phosphoglycolates on protruding 5' ends on DSBs due to DNA damage by radiation and free radicals. Has preference for single-stranded DNA or duplex DNA with a 4 base pair overhang as substrate. Also has 3'-tyrosyl DNA phosphodiesterase activity, but less efficiently and much slower than TDP1. Constitutes the major if not only 5'-tyrosyl-DNA phosphodiesterase in cells. Also acts as an adapter by participating in the specific activation of MAP3K7/TAK1 in response to TGF-beta: associates with components of the TGF-beta receptor-TRAF6-TAK1 signaling module and promotes their ubiquitination dependent complex formation. Involved in non-canonical TGF-beta induced signaling routes. May also act as a negative regulator of ETS1 and may inhibit NF-kappa-B activation. Acts as a regulator of ribosome biogenesis following stress. This Bos taurus (Bovine) protein is Tyrosyl-DNA phosphodiesterase 2 (TDP2).